The sequence spans 369 residues: 3-isopropylmalate dehydrogenase (369 aa).

NAD(+) is bound at residue 77-90 (GPKYDVLDFSVKPE). Arg97, Arg107, Arg135, and Asp226 together coordinate substrate. Positions 226, 250, and 254 each coordinate Mg(2+). Residue 289–301 (GSAPDIAGQGKAN) participates in NAD(+) binding.

Belongs to the isocitrate and isopropylmalate dehydrogenases family. LeuB type 1 subfamily. Homodimer. Mg(2+) is required as a cofactor. It depends on Mn(2+) as a cofactor.

It is found in the cytoplasm. The enzyme catalyses (2R,3S)-3-isopropylmalate + NAD(+) = 4-methyl-2-oxopentanoate + CO2 + NADH. The protein operates within amino-acid biosynthesis; L-leucine biosynthesis; L-leucine from 3-methyl-2-oxobutanoate: step 3/4. Catalyzes the oxidation of 3-carboxy-2-hydroxy-4-methylpentanoate (3-isopropylmalate) to 3-carboxy-4-methyl-2-oxopentanoate. The product decarboxylates to 4-methyl-2 oxopentanoate. The sequence is that of 3-isopropylmalate dehydrogenase from Cereibacter sphaeroides (strain ATCC 17023 / DSM 158 / JCM 6121 / CCUG 31486 / LMG 2827 / NBRC 12203 / NCIMB 8253 / ATH 2.4.1.) (Rhodobacter sphaeroides).